The sequence spans 350 residues: Pro-cathepsin H (350 aa).

Residues 1 to 19 (MAQWTLLIVFFCVATAAAG) form the signal peptide. Residues 20–113 (LSFHDSNPIR…WEEFRSHRLG (94 aa)) constitute a propeptide, activation peptide. N-linked (GlcNAc...) asparagine glycosylation is present at Asn-117. A propeptide spans 122–132 (LKGNHRITDVV) (removed in mature form). 2 disulfide bridges follow: Cys-154–Cys-197 and Cys-188–Cys-230. Cys-157 is a catalytic residue. A glycan (N-linked (GlcNAc...) asparagine) is linked at Asn-177. Asn-246 carries an N-linked (GlcNAc...) asparagine glycan. A disulfide bond links Cys-288 and Cys-338. Residues His-297 and Asn-317 contribute to the active site.

This sequence belongs to the peptidase C1 family. Interacts with KPI104 and KPI106. Composed of a mini chain and a large chain. The large chain may be split into heavy and light chain. All chains are held together by disulfide bonds.

Its subcellular location is the vacuole. It localises to the lysosome. It carries out the reaction Hydrolysis of proteins, acting as an aminopeptidase (notably, cleaving Arg-|-Xaa bonds) as well as an endopeptidase.. In terms of biological role, may play a role in proteolysis leading to mobilization of nitrogen during senescence and starvation. This is Pro-cathepsin H from Medicago truncatula (Barrel medic).